We begin with the raw amino-acid sequence, 229 residues long: Octanoyltransferase (229 aa).

The BPL/LPL catalytic domain maps to Pro47–Trp225. Substrate contacts are provided by residues Arg89–His96, Ala156–Gly158, and Gly169–Ala171. Catalysis depends on Cys187, which acts as the Acyl-thioester intermediate.

The protein belongs to the LipB family.

It is found in the cytoplasm. It catalyses the reaction octanoyl-[ACP] + L-lysyl-[protein] = N(6)-octanoyl-L-lysyl-[protein] + holo-[ACP] + H(+). It functions in the pathway protein modification; protein lipoylation via endogenous pathway; protein N(6)-(lipoyl)lysine from octanoyl-[acyl-carrier-protein]: step 1/2. In terms of biological role, catalyzes the transfer of endogenously produced octanoic acid from octanoyl-acyl-carrier-protein onto the lipoyl domains of lipoate-dependent enzymes. Lipoyl-ACP can also act as a substrate although octanoyl-ACP is likely to be the physiological substrate. The sequence is that of Octanoyltransferase from Synechococcus sp. (strain CC9902).